Reading from the N-terminus, the 351-residue chain is sn-glycerol-3-phosphate import ATP-binding protein UgpC (351 aa).

An ABC transporter domain is found at 4 to 235 (IVLDNVRKSY…PASTFVATFI (232 aa)). An ATP-binding site is contributed by 37-44 (GPSGCGKS).

The protein belongs to the ABC transporter superfamily. sn-glycerol-3-phosphate importer (TC 3.A.1.1.3) family. As to quaternary structure, the complex is composed of two ATP-binding proteins (UgpC), two transmembrane proteins (UgpA and UgpE) and a solute-binding protein (UgpB).

The protein localises to the cell inner membrane. The enzyme catalyses sn-glycerol 3-phosphate(out) + ATP + H2O = sn-glycerol 3-phosphate(in) + ADP + phosphate + H(+). In terms of biological role, part of the ABC transporter complex UgpBAEC involved in sn-glycerol-3-phosphate (G3P) import. Responsible for energy coupling to the transport system. The chain is sn-glycerol-3-phosphate import ATP-binding protein UgpC from Brucella abortus biovar 1 (strain 9-941).